We begin with the raw amino-acid sequence, 59 residues long: MAELKITQVRSTIGARWKQRESLRTLGLRKIRQSVVREDNAQTRGLIKTVHHLVTVEEV.

Belongs to the universal ribosomal protein uL30 family. In terms of assembly, part of the 50S ribosomal subunit.

This Mycolicibacterium vanbaalenii (strain DSM 7251 / JCM 13017 / BCRC 16820 / KCTC 9966 / NRRL B-24157 / PYR-1) (Mycobacterium vanbaalenii) protein is Large ribosomal subunit protein uL30.